The primary structure comprises 138 residues: Large ribosomal subunit protein uL16 (138 aa).

The segment covering 1-13 has biased composition (basic residues); sequence MLQPKRRKYRKEQ. The interval 1-20 is disordered; sequence MLQPKRRKYRKEQKGRNTGI.

The protein belongs to the universal ribosomal protein uL16 family. In terms of assembly, part of the 50S ribosomal subunit.

Its function is as follows. Binds 23S rRNA and is also seen to make contacts with the A and possibly P site tRNAs. The protein is Large ribosomal subunit protein uL16 of Ralstonia nicotianae (strain ATCC BAA-1114 / GMI1000) (Ralstonia solanacearum).